Here is a 350-residue protein sequence, read N- to C-terminus: Protein YIPF3 (350 aa).

The segment covering 1 to 10 (MATTAAPAGG) has biased composition (low complexity). The interval 1-51 (MATTAAPAGGARNGAGPEWGGFEENIQGGGSAVIDMENMDDTSGSSFEDMG) is disordered. N-acetylalanine is present on A2. Over 2–148 (ATTAAPAGGA…PIKMVNFPQK (147 aa)) the chain is Cytoplasmic. Residues 149 to 169 (IAGELYGPLMLVFTLVAILLH) form a helical membrane-spanning segment. The Lumenal segment spans residues 170 to 187 (GMKTSDTIIREGTLMGTA). A helical membrane pass occupies residues 188–208 (IGTCFGYWLGVSSFIYFLAYL). Over 209-214 (CNAQIT) the chain is Cytoplasmic. Residues 215 to 237 (MLQMLALLGYGLFGHCIVLFITY) form a helical membrane-spanning segment. Residues 238-240 (NIH) lie on the Lumenal side of the membrane. The helical transmembrane segment at 241 to 263 (LHALFYLFWLLVGGLSTLRMVAV) threads the bilayer. Residues 264–274 (LVSRTVGPTQR) are Cytoplasmic-facing. Residues 275–295 (LLLCGTLAALHMLFLLYLHFA) traverse the membrane as a helical segment. Residues 296–350 (YHKVVEGILDTLEGPNIPPIQRVPRDIPAMLPAARLPTTVLNATAKAVAVTLQSH) lie on the Lumenal side of the membrane. O-linked (GalNAc...) threonine glycans are attached at residues T333 and T334. A glycan (N-linked (GlcNAc...) asparagine) is linked at N337. 2 O-linked (GalNAc...) threonine glycosylation sites follow: T339 and T346.

This sequence belongs to the YIP1 family. In terms of assembly, interacts with YIPF4 and YIPF5. In terms of processing, N-glycosylated in the ER (40 kDa form I), then O-glycosylated in the Golgi apparatus (46 kDa form II), the C-terminal lumenal region is later removed in the Golgi apparatus to produce a 36 kDa form III. O-glycosylated with core 1-like and core 2-like glycans. O-glycan heterogeneity at Thr-346: HexNAc (minor), HexHexNAc (major), Hex1HexNAc2 (minor), Hex2HexNAc2 (minor) and dHex1Hex2HexNAc2 (minor). Expressed by nucleated hematopoietic cells (at protein level).

It localises to the cell membrane. The protein localises to the cytoplasm. Its subcellular location is the golgi apparatus. The protein resides in the cis-Golgi network membrane. In terms of biological role, involved in the maintenance of the Golgi structure. May play a role in hematopoiesis. This Homo sapiens (Human) protein is Protein YIPF3 (YIPF3).